The sequence spans 802 residues: MPEITAFPQPKSDLSILLLGAGGREHALAFKLAQSSRVARIVVCPGNGGTALMGGKVSNLALPWGAPPAFRSIVEWAQKENIDLVVPGPEQPLVDGVEGAFKKVGIPVFGPSPAAAMLEGSKSLSKEFMARHNIPTAAFRSFTSTQYEDAVAYIKSKPFTSGRSVIKASGLAAGKGVLIPETDEEAFAALKSVMVDKEFGDAGDEVVVEEYLSGPEISVLAFSDGYTIVPMPAAQDHKRIGEGDTGLNTGGMGAYAPAPIATKEIMERCVKDVLEPTIKGMREDGYPFVGMLFTGFMITADGPRVLEYNVRFGDPETQALMLLLDEQTDLAEVLLACVERRLDSIKLGYKQGYAVSVVLASEGYPGSYPKGLPMTLNPTPEGVEVFHAGTKRSDNVTVTDGGRVLAVCASAPTLRAAVDLAYSGISQISFQGQTFRRDIAYRALSSEPPAEPKGLTYAAAGVSVDAGNDLVEAIKPVVKATRRPGADSDIGGFGGAFDLAKAGYKDPILVSGTDGVGTKLRVALDHGKHNTVGIDLVAMSVNDLIVQGAEPLYFLDYYACSKLDVPVAADVITGIAEGCLQAGCALIGGETAEMPGMYHGDDYDLAGFAVGVVERAQILPTPDIASGDVLLALSSSGPHSNGFSLIRKIVSLSNLSLHDTAPWDKNTSVGDALLTPTKVYIKPLLPGIKSGLYKGMSHITGGGFTENIPRIFSSASNLGVKLDLTSYSLPAIWKWLMRAGNVEAKEMVRTFNCGVGMIIIVAKDKADAALSSLKENGEEAWVIGEVQEKKGVEYVGLDKFGL.

The tract at residues 1–444 (MPEITAFPQP…FRRDIAYRAL (444 aa)) is GARS. The region spanning 126-339 (KEFMARHNIP…LAEVLLACVE (214 aa)) is the ATP-grasp domain. Residue 157 to 218 (KPFTSGRSVI…EEYLSGPEIS (62 aa)) participates in ATP binding. 2 residues coordinate Mg(2+): glutamate 307 and asparagine 309. Residues 455 to 788 (LTYAAAGVSV…EAWVIGEVQE (334 aa)) form an AIRS region.

It in the N-terminal section; belongs to the GARS family. This sequence in the C-terminal section; belongs to the AIR synthase family. Homodimer. It depends on Mg(2+) as a cofactor. Mn(2+) is required as a cofactor.

It localises to the cytoplasm. Its subcellular location is the cytosol. It carries out the reaction 2-formamido-N(1)-(5-O-phospho-beta-D-ribosyl)acetamidine + ATP = 5-amino-1-(5-phospho-beta-D-ribosyl)imidazole + ADP + phosphate + H(+). It catalyses the reaction 5-phospho-beta-D-ribosylamine + glycine + ATP = N(1)-(5-phospho-beta-D-ribosyl)glycinamide + ADP + phosphate + H(+). It functions in the pathway purine metabolism; IMP biosynthesis via de novo pathway; 5-amino-1-(5-phospho-D-ribosyl)imidazole from N(2)-formyl-N(1)-(5-phospho-D-ribosyl)glycinamide: step 2/2. The protein operates within purine metabolism; IMP biosynthesis via de novo pathway; N(1)-(5-phospho-D-ribosyl)glycinamide from 5-phospho-alpha-D-ribose 1-diphosphate: step 2/2. In terms of biological role, catalyzes the second and fifth step in the 'de novo' purine biosynthesis pathway; contains phosphoribosylamine--glycine ligase (GARS) and phosphoribosylformylglycinamidine cyclo-ligase (AIRS) activities. The sequence is that of Bifunctional purine biosynthetic protein ADE5,7 from Cryptococcus neoformans var. grubii serotype A (strain H99 / ATCC 208821 / CBS 10515 / FGSC 9487) (Filobasidiella neoformans var. grubii).